The chain runs to 615 residues: Elongation factor 4 (615 aa).

One can recognise a tr-type G domain in the interval 14 to 200 (ARIRNFCIIA…KVVELIPAPT (187 aa)). Residues 26–31 (DHGKST) and 147–150 (NKID) each bind GTP.

This sequence belongs to the TRAFAC class translation factor GTPase superfamily. Classic translation factor GTPase family. LepA subfamily.

It localises to the cell membrane. The enzyme catalyses GTP + H2O = GDP + phosphate + H(+). Its function is as follows. Required for accurate and efficient protein synthesis under certain stress conditions. May act as a fidelity factor of the translation reaction, by catalyzing a one-codon backward translocation of tRNAs on improperly translocated ribosomes. Back-translocation proceeds from a post-translocation (POST) complex to a pre-translocation (PRE) complex, thus giving elongation factor G a second chance to translocate the tRNAs correctly. Binds to ribosomes in a GTP-dependent manner. The sequence is that of Elongation factor 4 from Corynebacterium glutamicum (strain ATCC 13032 / DSM 20300 / JCM 1318 / BCRC 11384 / CCUG 27702 / LMG 3730 / NBRC 12168 / NCIMB 10025 / NRRL B-2784 / 534).